We begin with the raw amino-acid sequence, 342 residues long: Probable dual-specificity RNA methyltransferase RlmN (342 aa).

Glutamate 91 acts as the Proton acceptor in catalysis. Positions 97 to 326 (YRFGNTACVS…CTVRRELGSD (230 aa)) constitute a Radical SAM core domain. Cysteine 104 and cysteine 331 form a disulfide bridge. Cysteine 111, cysteine 115, and cysteine 118 together coordinate [4Fe-4S] cluster. Residues 157-158 (GE), serine 189, 212-214 (SLH), and asparagine 288 each bind S-adenosyl-L-methionine. Catalysis depends on cysteine 331, which acts as the S-methylcysteine intermediate.

The protein belongs to the radical SAM superfamily. RlmN family. It depends on [4Fe-4S] cluster as a cofactor.

It is found in the cytoplasm. It carries out the reaction adenosine(2503) in 23S rRNA + 2 reduced [2Fe-2S]-[ferredoxin] + 2 S-adenosyl-L-methionine = 2-methyladenosine(2503) in 23S rRNA + 5'-deoxyadenosine + L-methionine + 2 oxidized [2Fe-2S]-[ferredoxin] + S-adenosyl-L-homocysteine. The enzyme catalyses adenosine(37) in tRNA + 2 reduced [2Fe-2S]-[ferredoxin] + 2 S-adenosyl-L-methionine = 2-methyladenosine(37) in tRNA + 5'-deoxyadenosine + L-methionine + 2 oxidized [2Fe-2S]-[ferredoxin] + S-adenosyl-L-homocysteine. Specifically methylates position 2 of adenine 2503 in 23S rRNA and position 2 of adenine 37 in tRNAs. The chain is Probable dual-specificity RNA methyltransferase RlmN from Thermoanaerobacter pseudethanolicus (strain ATCC 33223 / 39E) (Clostridium thermohydrosulfuricum).